The sequence spans 230 residues: 2-C-methyl-D-erythritol 4-phosphate cytidylyltransferase (230 aa).

The protein belongs to the IspD/TarI cytidylyltransferase family. IspD subfamily.

It carries out the reaction 2-C-methyl-D-erythritol 4-phosphate + CTP + H(+) = 4-CDP-2-C-methyl-D-erythritol + diphosphate. It participates in isoprenoid biosynthesis; isopentenyl diphosphate biosynthesis via DXP pathway; isopentenyl diphosphate from 1-deoxy-D-xylulose 5-phosphate: step 2/6. Its function is as follows. Catalyzes the formation of 4-diphosphocytidyl-2-C-methyl-D-erythritol from CTP and 2-C-methyl-D-erythritol 4-phosphate (MEP). This is 2-C-methyl-D-erythritol 4-phosphate cytidylyltransferase from Synechocystis sp. (strain ATCC 27184 / PCC 6803 / Kazusa).